Reading from the N-terminus, the 541-residue chain is AT-rich interactive domain-containing protein 3A (541 aa).

The disordered stretch occupies residues 17–172 (RLQQELEARQ…KHPNPQAFPT (156 aa)). The span at 55–73 (LKIQRAQAAALAAMRAAAA) shows a compositional bias: low complexity. A compositionally biased stretch (acidic residues) spans 84 to 102 (SDEEEEDGESMASDEEDEK). Basic and acidic residues predominate over residues 103–112 (ERDGESERYP). Over residues 115–144 (GSEEEDLKGKWDEDDFEDEGEEDDYEDMEE) the composition is skewed to acidic residues. Residues 212–304 (DPKRKEFLDD…YLYPYECEKR (93 aa)) form the ARID domain. The 95-residue stretch at 407-501 (AALEQLREKL…GVLFAQPPTS (95 aa)) folds into the REKLES domain. Residues 408-450 (ALEQLREKLESGEPPEKKMALGTEEQQRLQRAIQHNLLAMTAQ) are important for nuclear localization. The segment at 452–473 (PMNIRINSQAEGRQDSAVNLTT) is homodimerization. The interval 497–504 (QPPTSASG) is important for cytoplasmic localization. Residues 499–541 (PTSASGTSKGSSNRTGSIGGGSSTSQAAPPPAPSAPTSNNPSP) are disordered.

As to quaternary structure, homodimer.

The protein resides in the nucleus. It localises to the cytoplasm. Functionally, transcription factor required for smad1 and smad2-mediated responses to TGFbeta during mesoderm induction. The sequence is that of AT-rich interactive domain-containing protein 3A (arid3a) from Xenopus tropicalis (Western clawed frog).